The primary structure comprises 170 residues: ATP synthase subunit b (170 aa).

The helical transmembrane segment at 15 to 37 (FNLFETNILNWAVVIFGLYKFLP) threads the bilayer. The disordered stretch occupies residues 72–98 (AKKDLSSAEEKASQIKADSLKRSESIR).

Belongs to the ATPase B chain family. In terms of assembly, F-type ATPases have 2 components, F(1) - the catalytic core - and F(0) - the membrane proton channel. F(1) has five subunits: alpha(3), beta(3), gamma(1), delta(1), epsilon(1). F(0) has four main subunits: a(1), b(1), b'(1) and c(10-14). The alpha and beta chains form an alternating ring which encloses part of the gamma chain. F(1) is attached to F(0) by a central stalk formed by the gamma and epsilon chains, while a peripheral stalk is formed by the delta, b and b' chains.

The protein localises to the cellular thylakoid membrane. Its function is as follows. F(1)F(0) ATP synthase produces ATP from ADP in the presence of a proton or sodium gradient. F-type ATPases consist of two structural domains, F(1) containing the extramembraneous catalytic core and F(0) containing the membrane proton channel, linked together by a central stalk and a peripheral stalk. During catalysis, ATP synthesis in the catalytic domain of F(1) is coupled via a rotary mechanism of the central stalk subunits to proton translocation. Functionally, component of the F(0) channel, it forms part of the peripheral stalk, linking F(1) to F(0). This is ATP synthase subunit b from Prochlorococcus marinus (strain MIT 9215).